Consider the following 610-residue polypeptide: UvrABC system protein C (610 aa).

The region spanning 16-94 (NQPGVYRMYD…IKRYQPRYNV (79 aa)) is the GIY-YIG domain. The region spanning 204–239 (SQVIDALVARMEEASRALRFEEAARLRDQIQAVRRV) is the UVR domain.

It belongs to the UvrC family. In terms of assembly, interacts with UvrB in an incision complex.

It is found in the cytoplasm. The UvrABC repair system catalyzes the recognition and processing of DNA lesions. UvrC both incises the 5' and 3' sides of the lesion. The N-terminal half is responsible for the 3' incision and the C-terminal half is responsible for the 5' incision. This chain is UvrABC system protein C, found in Edwardsiella ictaluri (strain 93-146).